Reading from the N-terminus, the 210-residue chain is Somatotropin (210 aa).

An N-terminal signal peptide occupies residues 1–23 (MARVLVLLSVVLVSLLVNQGRAS). Residue histidine 38 participates in Zn(2+) binding. Residues cysteine 71 and cysteine 183 are joined by a disulfide bond. Glutamate 192 lines the Zn(2+) pocket. Residues cysteine 200 and cysteine 208 are joined by a disulfide bond.

It belongs to the somatotropin/prolactin family.

Its subcellular location is the secreted. Growth hormone plays an important role in growth control. This chain is Somatotropin (gh), found in Cyprinus carpio (Common carp).